The following is a 126-amino-acid chain: Glycine cleavage system H protein (126 aa).

A Lipoyl-binding domain is found at 24–105 (TLTVGITDHA…AYGVWLFKLK (82 aa)). The residue at position 65 (lysine 65) is an N6-lipoyllysine.

It belongs to the GcvH family. The glycine cleavage system is composed of four proteins: P, T, L and H. Requires (R)-lipoate as cofactor.

Functionally, the glycine cleavage system catalyzes the degradation of glycine. The H protein shuttles the methylamine group of glycine from the P protein to the T protein. This Burkholderia vietnamiensis (strain G4 / LMG 22486) (Burkholderia cepacia (strain R1808)) protein is Glycine cleavage system H protein.